The sequence spans 562 residues: Actin-related protein 8 (562 aa).

Residue 248 to 251 coordinates ATP; it reads DVGD.

Belongs to the actin family. ARP8 subfamily. In terms of assembly, component of the chromatin remodeling Ino80 complex. Exists as monomers and dimers, but the dimer is most probably the biologically relevant form required for stable interactions with histones that exploits the twofold symmetry of the nucleosome core.

It is found in the nucleus. Plays an important role in the functional organization of mitotic chromosomes. Exhibits low basal ATPase activity, and unable to polymerize. In terms of biological role, proposed core component of the chromatin remodeling INO80 complex which is involved in transcriptional regulation, DNA replication and probably DNA repair. Strongly prefer nucleosomes and H3-H4 tetramers over H2A-H2B dimers, suggesting it may act as a nucleosome recognition module within the complex. This is Actin-related protein 8 from Aedes aegypti (Yellowfever mosquito).